A 387-amino-acid chain; its full sequence is Succinate--CoA ligase [ADP-forming] subunit beta (387 aa).

An ATP-grasp domain is found at 9 to 245 (KDLLESYGLK…KSQENAKELK (237 aa)). ATP contacts are provided by residues Lys-46, 53-55 (GRG), Glu-100, Tyr-103, and Glu-108. Residues Asn-200 and Asp-214 each coordinate Mg(2+). Residues Asn-265 and 322–324 (GIV) contribute to the substrate site.

Belongs to the succinate/malate CoA ligase beta subunit family. In terms of assembly, heterotetramer of two alpha and two beta subunits. Requires Mg(2+) as cofactor.

The enzyme catalyses succinate + ATP + CoA = succinyl-CoA + ADP + phosphate. It catalyses the reaction GTP + succinate + CoA = succinyl-CoA + GDP + phosphate. It participates in carbohydrate metabolism; tricarboxylic acid cycle; succinate from succinyl-CoA (ligase route): step 1/1. In terms of biological role, succinyl-CoA synthetase functions in the citric acid cycle (TCA), coupling the hydrolysis of succinyl-CoA to the synthesis of either ATP or GTP and thus represents the only step of substrate-level phosphorylation in the TCA. The beta subunit provides nucleotide specificity of the enzyme and binds the substrate succinate, while the binding sites for coenzyme A and phosphate are found in the alpha subunit. The polypeptide is Succinate--CoA ligase [ADP-forming] subunit beta (Francisella tularensis subsp. novicida (strain U112)).